A 181-amino-acid chain; its full sequence is Acireductone dioxygenase (181 aa).

Residues histidine 98, histidine 100, glutamate 104, and histidine 142 each coordinate Fe(2+). Positions 98, 100, 104, and 142 each coordinate Ni(2+).

This sequence belongs to the acireductone dioxygenase (ARD) family. Monomer. Requires Fe(2+) as cofactor. Ni(2+) serves as cofactor.

It catalyses the reaction 1,2-dihydroxy-5-(methylsulfanyl)pent-1-en-3-one + O2 = 3-(methylsulfanyl)propanoate + CO + formate + 2 H(+). The catalysed reaction is 1,2-dihydroxy-5-(methylsulfanyl)pent-1-en-3-one + O2 = 4-methylsulfanyl-2-oxobutanoate + formate + 2 H(+). It participates in amino-acid biosynthesis; L-methionine biosynthesis via salvage pathway; L-methionine from S-methyl-5-thio-alpha-D-ribose 1-phosphate: step 5/6. In terms of biological role, catalyzes 2 different reactions between oxygen and the acireductone 1,2-dihydroxy-3-keto-5-methylthiopentene (DHK-MTPene) depending upon the metal bound in the active site. Fe-containing acireductone dioxygenase (Fe-ARD) produces formate and 2-keto-4-methylthiobutyrate (KMTB), the alpha-ketoacid precursor of methionine in the methionine recycle pathway. Ni-containing acireductone dioxygenase (Ni-ARD) produces methylthiopropionate, carbon monoxide and formate, and does not lie on the methionine recycle pathway. The protein is Acireductone dioxygenase of Synechococcus sp. (strain ATCC 27144 / PCC 6301 / SAUG 1402/1) (Anacystis nidulans).